Here is a 229-residue protein sequence, read N- to C-terminus: 5'-methylthioadenosine/S-adenosylhomocysteine nucleosidase (229 aa).

Residue Glu-12 is the Proton acceptor of the active site. Substrate contacts are provided by residues Gly-78, Ile-152, and 173 to 174 (ME). Residue Asp-197 is the Proton donor of the active site.

It belongs to the PNP/UDP phosphorylase family. MtnN subfamily.

The catalysed reaction is S-adenosyl-L-homocysteine + H2O = S-(5-deoxy-D-ribos-5-yl)-L-homocysteine + adenine. It catalyses the reaction S-methyl-5'-thioadenosine + H2O = 5-(methylsulfanyl)-D-ribose + adenine. It carries out the reaction 5'-deoxyadenosine + H2O = 5-deoxy-D-ribose + adenine. It functions in the pathway amino-acid biosynthesis; L-methionine biosynthesis via salvage pathway; S-methyl-5-thio-alpha-D-ribose 1-phosphate from S-methyl-5'-thioadenosine (hydrolase route): step 1/2. Catalyzes the irreversible cleavage of the glycosidic bond in both 5'-methylthioadenosine (MTA) and S-adenosylhomocysteine (SAH/AdoHcy) to adenine and the corresponding thioribose, 5'-methylthioribose and S-ribosylhomocysteine, respectively. Also cleaves 5'-deoxyadenosine, a toxic by-product of radical S-adenosylmethionine (SAM) enzymes, into 5-deoxyribose and adenine. This chain is 5'-methylthioadenosine/S-adenosylhomocysteine nucleosidase, found in Histophilus somni (strain 2336) (Haemophilus somnus).